Here is a 110-residue protein sequence, read N- to C-terminus: Putative protein RIG (110 aa).

As to expression, expressed predominantly in brain and weakly in heart and lung. Expression is reduced or undetectable in cultured glioma cells, primary glioblastoma cells and malignant glioblastoma tumors.

In terms of biological role, may serve as a molecular marker for or play a role in the malignant progression of glioblastomas. This is Putative protein RIG (RIG) from Homo sapiens (Human).